Reading from the N-terminus, the 318-residue chain is Aspartate carbamoyltransferase catalytic subunit (318 aa).

Carbamoyl phosphate contacts are provided by arginine 58 and threonine 59. An L-aspartate-binding site is contributed by lysine 86. Arginine 108, histidine 141, and glutamine 144 together coordinate carbamoyl phosphate. 2 residues coordinate L-aspartate: arginine 174 and arginine 226. The carbamoyl phosphate site is built by glycine 270 and proline 271.

Belongs to the aspartate/ornithine carbamoyltransferase superfamily. ATCase family. In terms of assembly, heterododecamer (2C3:3R2) of six catalytic PyrB chains organized as two trimers (C3), and six regulatory PyrI chains organized as three dimers (R2).

It carries out the reaction carbamoyl phosphate + L-aspartate = N-carbamoyl-L-aspartate + phosphate + H(+). It participates in pyrimidine metabolism; UMP biosynthesis via de novo pathway; (S)-dihydroorotate from bicarbonate: step 2/3. Functionally, catalyzes the condensation of carbamoyl phosphate and aspartate to form carbamoyl aspartate and inorganic phosphate, the committed step in the de novo pyrimidine nucleotide biosynthesis pathway. The chain is Aspartate carbamoyltransferase catalytic subunit from Lactobacillus helveticus (strain DPC 4571).